A 124-amino-acid polypeptide reads, in one-letter code: Small ribosomal subunit protein uS12 (124 aa).

Residue Asp89 is modified to 3-methylthioaspartic acid.

The protein belongs to the universal ribosomal protein uS12 family. In terms of assembly, part of the 30S ribosomal subunit. Contacts proteins S8 and S17. May interact with IF1 in the 30S initiation complex.

In terms of biological role, with S4 and S5 plays an important role in translational accuracy. Its function is as follows. Interacts with and stabilizes bases of the 16S rRNA that are involved in tRNA selection in the A site and with the mRNA backbone. Located at the interface of the 30S and 50S subunits, it traverses the body of the 30S subunit contacting proteins on the other side and probably holding the rRNA structure together. The combined cluster of proteins S8, S12 and S17 appears to hold together the shoulder and platform of the 30S subunit. The polypeptide is Small ribosomal subunit protein uS12 (Buchnera aphidicola subsp. Cinara cedri (strain Cc)).